The primary structure comprises 806 residues: Acetyl-CoA decarbonylase/synthase complex subunit alpha 1 (806 aa).

Residues C73, C76, C77, C79, C84, and C94 each coordinate [4Fe-4S] cluster. CO is bound at residue H117. Positions 250, 278, and 323 each coordinate [Ni-4Fe-4S] cluster. 4Fe-4S ferredoxin-type domains lie at 406 to 436 and 445 to 475; these read SDEQ…IPEA and FSYL…LSVI. C417, C420, C423, C427, C455, C458, C461, and C465 together coordinate [4Fe-4S] cluster. [Ni-4Fe-4S] cluster-binding residues include C523, C552, and C587.

It belongs to the Ni-containing carbon monoxide dehydrogenase family. In terms of assembly, heterotetramer of two alpha and two epsilon subunits. The ACDS complex is made up of alpha, epsilon, beta, gamma and delta subunits with a probable stoichiometry of (alpha(2)epsilon(2))(4)-beta(8)-(gamma(1)delta(1))(8). The cofactor is [4Fe-4S] cluster. Requires [Ni-4Fe-4S] cluster as cofactor.

The enzyme catalyses CO + 2 oxidized [2Fe-2S]-[ferredoxin] + H2O = 2 reduced [2Fe-2S]-[ferredoxin] + CO2 + 2 H(+). It functions in the pathway one-carbon metabolism; methanogenesis from acetate. Functionally, part of the ACDS complex that catalyzes the reversible cleavage of acetyl-CoA, allowing growth on acetate as sole source of carbon and energy. The alpha-epsilon subcomponent functions as a carbon monoxide dehydrogenase. The polypeptide is Acetyl-CoA decarbonylase/synthase complex subunit alpha 1 (Methanosarcina mazei (strain ATCC BAA-159 / DSM 3647 / Goe1 / Go1 / JCM 11833 / OCM 88) (Methanosarcina frisia)).